We begin with the raw amino-acid sequence, 351 residues long: Fruit bromelain (351 aa).

An N-terminal signal peptide occupies residues 1–24 (MASKVQLVFLFLFLCAMWASPSAA). A propeptide spans 25 to 121 (SRDEPNDPMM…VVSFDDVNIS (97 aa)) (activation peptide). Residue Asn119 is glycosylated (N-linked (GlcNAc...) asparagine). Cystine bridges form between Cys144–Cys184, Cys178–Cys217, and Cys273–Cys325. Residue Cys147 is part of the active site. Active-site residues include His279 and Asn300.

It belongs to the peptidase C1 family.

It catalyses the reaction Hydrolysis of proteins with broad specificity for peptide bonds. Bz-Phe-Val-Arg-|-NHMec is a good synthetic substrate, but there is no action on Z-Arg-Arg-|-NHMec (cf. stem bromelain).. Functionally, cysteine proteinase with a high level of diversity in substrate specificity. The chain is Fruit bromelain from Ananas comosus (Pineapple).